A 372-amino-acid chain; its full sequence is Probable G-protein coupled receptor 45 (372 aa).

The Extracellular portion of the chain corresponds to 1-38 (MACNSTSLEAYTYLLLNTSNASDSGSTQLPAPLRISLA). Residues Asn4, Asn17, and Asn20 are each glycosylated (N-linked (GlcNAc...) asparagine). The chain crosses the membrane as a helical span at residues 39-59 (IVMLLMTVVGFLGNTVVCIIV). Residues 60-75 (YQRPAMRSAINLLLAT) are Cytoplasmic-facing. Residues 76–96 (LAFSDIMLSLCCMPFTAVTLI) form a helical membrane-spanning segment. The Extracellular segment spans residues 97–109 (TVRWHFGDHFCRL). The helical transmembrane segment at 110-130 (SATLYWFFVLEGVAILLIISV) threads the bilayer. The Cytoplasmic segment spans residues 131 to 149 (DRFLIIVQRQDKLNPRRAK). A helical membrane pass occupies residues 150–170 (VIIAVSWVLSFCIAGPSLTGW). Over 171–198 (TLVEVPARAPQCVLGYTELPADRAYVVT) the chain is Extracellular. Residues 199–219 (LVVAVFFAPFGVMLCAYMCIL) traverse the membrane as a helical segment. The Cytoplasmic segment spans residues 220–268 (NTVRKNAVRVHNQSDSLDLRQLTRAGLRRLQRQQQVSVDLSFKTKAFTT). The helical transmembrane segment at 269–289 (ILILFVGFSLCWLPHSVYSLL) threads the bilayer. The Extracellular segment spans residues 290–305 (SVFSQRFYCGSSFYAT). A helical membrane pass occupies residues 306–326 (STCVLWLSYLKSVFNPIVYCW). Residues 327–372 (RIKKFREACIELLPQTFQILPKVPERIRRRIQPSTVYVCNENQSAV) are Cytoplasmic-facing.

The protein belongs to the G-protein coupled receptor 1 family. In terms of tissue distribution, expressed in brain; detected in the basal forebrain, frontal cortex, and caudate, but not in thalamus, hippocampus, or putamen.

The protein resides in the cell membrane. Orphan receptor. May play a role in brain function. This Homo sapiens (Human) protein is Probable G-protein coupled receptor 45 (GPR45).